Here is a 369-residue protein sequence, read N- to C-terminus: Methionine import ATP-binding protein MetN 1 (369 aa).

An ABC transporter domain is found at 29–265 (IRLHGLGKRY…PRHAVTRSLL (237 aa)). Residue 62-69 (GRSGAGKS) participates in ATP binding.

The protein belongs to the ABC transporter superfamily. Methionine importer (TC 3.A.1.24) family. The complex is composed of two ATP-binding proteins (MetN), two transmembrane proteins (MetI) and a solute-binding protein (MetQ).

Its subcellular location is the cell inner membrane. The enzyme catalyses L-methionine(out) + ATP + H2O = L-methionine(in) + ADP + phosphate + H(+). It carries out the reaction D-methionine(out) + ATP + H2O = D-methionine(in) + ADP + phosphate + H(+). Functionally, part of the ABC transporter complex MetNIQ involved in methionine import. Responsible for energy coupling to the transport system. The sequence is that of Methionine import ATP-binding protein MetN 1 from Pseudomonas aeruginosa (strain ATCC 15692 / DSM 22644 / CIP 104116 / JCM 14847 / LMG 12228 / 1C / PRS 101 / PAO1).